The chain runs to 583 residues: Propane 2-monooxygenase operon transcriptional activator MimR (583 aa).

The Sigma-54 factor interaction domain maps to 320–513; it reads LAGQSSSFRR…LRHVLTETVR (194 aa). ATP contacts are provided by residues 349-356 and 395-404; these read ERGSGRTY and SADFAVIVSD.

Acts as a transcriptional activator of the mimABCD operon encoding the propane 2-monooxygenase complex. This Mycolicibacterium smegmatis (strain ATCC 700084 / mc(2)155) (Mycobacterium smegmatis) protein is Propane 2-monooxygenase operon transcriptional activator MimR.